A 298-amino-acid chain; its full sequence is Acetylglutamate kinase (298 aa).

Residues 69 to 70 (GG), arginine 91, and asparagine 196 contribute to the substrate site.

This sequence belongs to the acetylglutamate kinase family. ArgB subfamily.

The protein localises to the cytoplasm. The enzyme catalyses N-acetyl-L-glutamate + ATP = N-acetyl-L-glutamyl 5-phosphate + ADP. The protein operates within amino-acid biosynthesis; L-arginine biosynthesis; N(2)-acetyl-L-ornithine from L-glutamate: step 2/4. In terms of biological role, catalyzes the ATP-dependent phosphorylation of N-acetyl-L-glutamate. The protein is Acetylglutamate kinase of Rhodopseudomonas palustris (strain TIE-1).